A 141-amino-acid chain; its full sequence is 3-hydroxyacyl-[acyl-carrier-protein] dehydratase FabZ (141 aa).

The active site involves H49.

The protein belongs to the thioester dehydratase family. FabZ subfamily.

It localises to the cytoplasm. The enzyme catalyses a (3R)-hydroxyacyl-[ACP] = a (2E)-enoyl-[ACP] + H2O. Involved in unsaturated fatty acids biosynthesis. Catalyzes the dehydration of short chain beta-hydroxyacyl-ACPs and long chain saturated and unsaturated beta-hydroxyacyl-ACPs. In Clostridium acetobutylicum (strain ATCC 824 / DSM 792 / JCM 1419 / IAM 19013 / LMG 5710 / NBRC 13948 / NRRL B-527 / VKM B-1787 / 2291 / W), this protein is 3-hydroxyacyl-[acyl-carrier-protein] dehydratase FabZ.